The sequence spans 192 residues: Inosine triphosphate pyrophosphatase (192 aa).

Thr-10–Lys-15 lines the ITP pocket. Glu-43 provides a ligand contact to Mg(2+). ITP is bound by residues Lys-56, Asp-74–Thr-75, Lys-91, Phe-149–Asp-152, Lys-173, and His-178–Arg-179.

It belongs to the HAM1 NTPase family. In terms of assembly, homodimer. Mg(2+) serves as cofactor. The cofactor is Mn(2+).

It localises to the cytoplasm. The protein resides in the nucleus. The catalysed reaction is ITP + H2O = IMP + diphosphate + H(+). It carries out the reaction dITP + H2O = dIMP + diphosphate + H(+). It catalyses the reaction XTP + H2O = XMP + diphosphate + H(+). Functionally, pyrophosphatase that hydrolyzes non-canonical purine nucleotides such as inosine triphosphate (ITP), deoxyinosine triphosphate (dITP) or xanthosine 5'-triphosphate (XTP) to their respective monophosphate derivatives. The enzyme does not distinguish between the deoxy- and ribose forms. Probably excludes non-canonical purines from RNA and DNA precursor pools, thus preventing their incorporation into RNA and DNA and avoiding chromosomal lesions. The sequence is that of Inosine triphosphate pyrophosphatase from Candida glabrata (strain ATCC 2001 / BCRC 20586 / JCM 3761 / NBRC 0622 / NRRL Y-65 / CBS 138) (Yeast).